A 308-amino-acid chain; its full sequence is Aspartate carbamoyltransferase catalytic subunit (308 aa).

Carbamoyl phosphate-binding residues include arginine 55 and threonine 56. Lysine 84 provides a ligand contact to L-aspartate. Arginine 105, histidine 133, and glutamine 136 together coordinate carbamoyl phosphate. Residues arginine 167 and arginine 228 each contribute to the L-aspartate site. The carbamoyl phosphate site is built by leucine 267 and proline 268.

This sequence belongs to the aspartate/ornithine carbamoyltransferase superfamily. ATCase family. As to quaternary structure, heterooligomer of catalytic and regulatory chains.

It carries out the reaction carbamoyl phosphate + L-aspartate = N-carbamoyl-L-aspartate + phosphate + H(+). It participates in pyrimidine metabolism; UMP biosynthesis via de novo pathway; (S)-dihydroorotate from bicarbonate: step 2/3. Its function is as follows. Catalyzes the condensation of carbamoyl phosphate and aspartate to form carbamoyl aspartate and inorganic phosphate, the committed step in the de novo pyrimidine nucleotide biosynthesis pathway. This is Aspartate carbamoyltransferase catalytic subunit from Methanocella arvoryzae (strain DSM 22066 / NBRC 105507 / MRE50).